Consider the following 425-residue polypeptide: Histidine--tRNA ligase 1 (425 aa).

The protein belongs to the class-II aminoacyl-tRNA synthetase family. Homodimer.

The protein resides in the cytoplasm. The enzyme catalyses tRNA(His) + L-histidine + ATP = L-histidyl-tRNA(His) + AMP + diphosphate + H(+). The protein is Histidine--tRNA ligase 1 of Bacillus anthracis.